The sequence spans 412 residues: WW domain-containing oxidoreductase (412 aa).

The interval 1–24 is disordered; sequence MAALKYAGMEDTDSEDELPPGWEE. The region spanning 16–49 is the WW 1 domain; the sequence is DELPPGWEERSTKDGWVYYANHEEMKTQWEHPKT. The Nuclear localization signal motif lies at 50–55; it reads GKKKRC. The region spanning 57–90 is the WW 2 domain; it reads GALPYGWEQETDDKGQIFYVDHINKRKTYFDPRQ. Residue 128–134 coordinates NADP(+); the sequence is GANSGIG. Substrate is bound at residue Ser257. The active-site Proton acceptor is the Tyr290.

This sequence belongs to the short-chain dehydrogenases/reductases (SDR) family.

It is found in the cytoplasm. It localises to the mitochondrion. The protein resides in the golgi apparatus. Its subcellular location is the lysosome. Functionally, putative oxidoreductase. Acts as a tumor suppressor and plays a role in apoptosis. May function synergistically with p53/TP53 to control genotoxic stress-induced cell death. Plays a role in TGFB1 signaling and TGFB1-mediated cell death. May also play a role in tumor necrosis factor (TNF)-mediated cell death. Required for normal bone development. Inhibits Wnt signaling. The sequence is that of WW domain-containing oxidoreductase (wwox) from Danio rerio (Zebrafish).